Here is a 453-residue protein sequence, read N- to C-terminus: MTTDTIVAQATAPGRGGVGIIRVSGDKASDVAMAVLGHLPKVRYADYCDFKAADGAVIDQGIALYFKGPNSFTGEDVLELQGHGGQVVLDMLIKRVMDVDGVRIAKPGEFSEQAFMNDKLDLTQAEAIADLIDATSEQAAKSALNSLQGEFSTQVHELVDQVTNLRLYVEAAIDFPDEEVDFLSDGKIAASLGKIITKLDSVQSSAKQGAIIREGMKVVIAGRPNAGKSSLLNALAGKESAIVTEIAGTTRDVLREHIHLDGMPLHIIDTAGLRDTTDTVEQIGIERAWAEIETADQVLFMVDGTTTDAVDPHDIWPDFIDRLPKNLGVTVVRNKADLTGESLDATDEQGHKVFRLSAKTGSGVDELKAHLKSLMGYQSNLEGGFLARRRHLEALELASSHLALGQEQLEVYQAGELLAEELRMCQLALSEITGKFTSDDLLGKIFSSFCIGK.

The (6S)-5-formyl-5,6,7,8-tetrahydrofolate site is built by arginine 22, glutamate 79, and lysine 119. The region spanning 215–376 is the TrmE-type G domain; the sequence is GMKVVIAGRP…LKAHLKSLMG (162 aa). Asparagine 225 contributes to the K(+) binding site. GTP-binding positions include 225-230, 244-250, 269-272, and 334-337; these read NAGKSS, TEIAGTT, DTAG, and NKAD. Serine 229 is a Mg(2+) binding site. Residues threonine 244, isoleucine 246, and threonine 249 each contribute to the K(+) site. Residue threonine 250 participates in Mg(2+) binding. Lysine 453 provides a ligand contact to (6S)-5-formyl-5,6,7,8-tetrahydrofolate.

The protein belongs to the TRAFAC class TrmE-Era-EngA-EngB-Septin-like GTPase superfamily. TrmE GTPase family. In terms of assembly, homodimer. Heterotetramer of two MnmE and two MnmG subunits. K(+) is required as a cofactor.

It is found in the cytoplasm. In terms of biological role, exhibits a very high intrinsic GTPase hydrolysis rate. Involved in the addition of a carboxymethylaminomethyl (cmnm) group at the wobble position (U34) of certain tRNAs, forming tRNA-cmnm(5)s(2)U34. In Shewanella loihica (strain ATCC BAA-1088 / PV-4), this protein is tRNA modification GTPase MnmE.